The sequence spans 360 residues: Holliday junction branch migration complex subunit RuvB (360 aa).

Residues 1 to 46 (MAIKRSGNSDRPAKNPSSTPGTNAPTLLSPTPTHQEKETSEEKIRP) are disordered. The tract at residues 13-205 (AKNPSSTPGT…FGLIQRLRFY (193 aa)) is large ATPase domain (RuvB-L). The segment covering 15 to 33 (NPSSTPGTNAPTLLSPTPT) has biased composition (polar residues). Residues 34-46 (HQEKETSEEKIRP) are compositionally biased toward basic and acidic residues. ATP contacts are provided by residues isoleucine 44, arginine 45, glycine 86, lysine 89, threonine 90, threonine 91, 152–154 (EDY), arginine 195, tyrosine 205, and arginine 242. Residue threonine 90 participates in Mg(2+) binding. The tract at residues 206-276 (EVDELTLIVL…LASEALDIYQ (71 aa)) is small ATPAse domain (RuvB-S). The head domain (RuvB-H) stretch occupies residues 279–360 (KQGLDWIDRL…LTSEEQLSIF (82 aa)). Positions 334 and 339 each coordinate DNA.

It belongs to the RuvB family. In terms of assembly, homohexamer. Forms an RuvA(8)-RuvB(12)-Holliday junction (HJ) complex. HJ DNA is sandwiched between 2 RuvA tetramers; dsDNA enters through RuvA and exits via RuvB. An RuvB hexamer assembles on each DNA strand where it exits the tetramer. Each RuvB hexamer is contacted by two RuvA subunits (via domain III) on 2 adjacent RuvB subunits; this complex drives branch migration. In the full resolvosome a probable DNA-RuvA(4)-RuvB(12)-RuvC(2) complex forms which resolves the HJ.

It is found in the cytoplasm. The enzyme catalyses ATP + H2O = ADP + phosphate + H(+). Its function is as follows. The RuvA-RuvB-RuvC complex processes Holliday junction (HJ) DNA during genetic recombination and DNA repair, while the RuvA-RuvB complex plays an important role in the rescue of blocked DNA replication forks via replication fork reversal (RFR). RuvA specifically binds to HJ cruciform DNA, conferring on it an open structure. The RuvB hexamer acts as an ATP-dependent pump, pulling dsDNA into and through the RuvAB complex. RuvB forms 2 homohexamers on either side of HJ DNA bound by 1 or 2 RuvA tetramers; 4 subunits per hexamer contact DNA at a time. Coordinated motions by a converter formed by DNA-disengaged RuvB subunits stimulates ATP hydrolysis and nucleotide exchange. Immobilization of the converter enables RuvB to convert the ATP-contained energy into a lever motion, pulling 2 nucleotides of DNA out of the RuvA tetramer per ATP hydrolyzed, thus driving DNA branch migration. The RuvB motors rotate together with the DNA substrate, which together with the progressing nucleotide cycle form the mechanistic basis for DNA recombination by continuous HJ branch migration. Branch migration allows RuvC to scan DNA until it finds its consensus sequence, where it cleaves and resolves cruciform DNA. The chain is Holliday junction branch migration complex subunit RuvB from Rippkaea orientalis (strain PCC 8801 / RF-1) (Cyanothece sp. (strain PCC 8801)).